The primary structure comprises 217 residues: TLD domain-containing protein 2 (217 aa).

A disordered region spans residues 1–48 (MKSLRWRYTRLPSQVEDALSGEEDKEEEEEKEEETTPAPTPVPEHPMV). Acidic residues predominate over residues 19–35 (LSGEEDKEEEEEKEEET). Residues 56–217 (QVLGASEMSQ…ISELEAWVLS (162 aa)) form the TLDc domain.

This sequence belongs to the OXR1 family.

In Bos taurus (Bovine), this protein is TLD domain-containing protein 2 (TLDC2).